A 256-amino-acid polypeptide reads, in one-letter code: 3-dehydroquinate dehydratase (256 aa).

3-dehydroquinate is bound by residues S19, 38-40 (EIR), and R68. H122 (proton donor/acceptor) is an active-site residue. K147 (schiff-base intermediate with substrate) is an active-site residue. Residues R185, T204, and Q208 each contribute to the 3-dehydroquinate site.

The protein belongs to the type-I 3-dehydroquinase family. In terms of assembly, homodimer.

It carries out the reaction 3-dehydroquinate = 3-dehydroshikimate + H2O. Its pathway is metabolic intermediate biosynthesis; chorismate biosynthesis; chorismate from D-erythrose 4-phosphate and phosphoenolpyruvate: step 3/7. Functionally, involved in the third step of the chorismate pathway, which leads to the biosynthesis of aromatic amino acids. Catalyzes the cis-dehydration of 3-dehydroquinate (DHQ) and introduces the first double bond of the aromatic ring to yield 3-dehydroshikimate. This Methanospirillum hungatei JF-1 (strain ATCC 27890 / DSM 864 / NBRC 100397 / JF-1) protein is 3-dehydroquinate dehydratase.